The chain runs to 931 residues: Isoleucine--tRNA ligase (931 aa).

The 'HIGH' region motif lies at 58 to 68 (PYANGHLHCGH). Glu559 contributes to the L-isoleucyl-5'-AMP binding site. The 'KMSKS' region motif lies at 600 to 604 (KLSKS). Residue Lys603 coordinates ATP. Zn(2+)-binding residues include Cys894, Cys897, Cys914, and Cys917.

Belongs to the class-I aminoacyl-tRNA synthetase family. IleS type 1 subfamily. Monomer. Zn(2+) serves as cofactor.

The protein resides in the cytoplasm. It carries out the reaction tRNA(Ile) + L-isoleucine + ATP = L-isoleucyl-tRNA(Ile) + AMP + diphosphate. Functionally, catalyzes the attachment of isoleucine to tRNA(Ile). As IleRS can inadvertently accommodate and process structurally similar amino acids such as valine, to avoid such errors it has two additional distinct tRNA(Ile)-dependent editing activities. One activity is designated as 'pretransfer' editing and involves the hydrolysis of activated Val-AMP. The other activity is designated 'posttransfer' editing and involves deacylation of mischarged Val-tRNA(Ile). This chain is Isoleucine--tRNA ligase, found in Legionella pneumophila (strain Corby).